We begin with the raw amino-acid sequence, 408 residues long: Phosphopentomutase (408 aa).

Residues Asp-10, Asp-307, His-312, Asp-348, His-349, and His-360 each coordinate Mn(2+).

Belongs to the phosphopentomutase family. It depends on Mn(2+) as a cofactor.

The protein localises to the cytoplasm. The enzyme catalyses 2-deoxy-alpha-D-ribose 1-phosphate = 2-deoxy-D-ribose 5-phosphate. It catalyses the reaction alpha-D-ribose 1-phosphate = D-ribose 5-phosphate. Its pathway is carbohydrate degradation; 2-deoxy-D-ribose 1-phosphate degradation; D-glyceraldehyde 3-phosphate and acetaldehyde from 2-deoxy-alpha-D-ribose 1-phosphate: step 1/2. Functionally, isomerase that catalyzes the conversion of deoxy-ribose 1-phosphate (dRib-1-P) and ribose 1-phosphate (Rib-1-P) to deoxy-ribose 5-phosphate (dRib-5-P) and ribose 5-phosphate (Rib-5-P), respectively. The polypeptide is Phosphopentomutase (Buchnera aphidicola subsp. Baizongia pistaciae (strain Bp)).